We begin with the raw amino-acid sequence, 245 residues long: 1-(5-phosphoribosyl)-5-[(5-phosphoribosylamino)methylideneamino] imidazole-4-carboxamide isomerase (245 aa).

The Proton acceptor role is filled by D7. D129 functions as the Proton donor in the catalytic mechanism.

This sequence belongs to the HisA/HisF family.

It localises to the cytoplasm. The catalysed reaction is 1-(5-phospho-beta-D-ribosyl)-5-[(5-phospho-beta-D-ribosylamino)methylideneamino]imidazole-4-carboxamide = 5-[(5-phospho-1-deoxy-D-ribulos-1-ylimino)methylamino]-1-(5-phospho-beta-D-ribosyl)imidazole-4-carboxamide. It functions in the pathway amino-acid biosynthesis; L-histidine biosynthesis; L-histidine from 5-phospho-alpha-D-ribose 1-diphosphate: step 4/9. The polypeptide is 1-(5-phosphoribosyl)-5-[(5-phosphoribosylamino)methylideneamino] imidazole-4-carboxamide isomerase (Salmonella agona (strain SL483)).